A 627-amino-acid chain; its full sequence is Zinc finger protein 256 (627 aa).

The region spanning V14 to G96 is the KRAB domain. Residues G55–Q76 are disordered. The segment covering Y65–S75 has biased composition (polar residues). 15 C2H2-type zinc fingers span residues N90 to H112, Y239 to H261, Y267 to H289, H295 to H317, Y323 to H345, Y351 to H373, Y379 to H401, Y407 to H429, H435 to H457, Y463 to H485, Y491 to H513, Y519 to H541, Y547 to H569, Y575 to H597, and Y603 to H625.

It belongs to the krueppel C2H2-type zinc-finger protein family. Interacts with TRIM28.

It is found in the nucleus. Functionally, transcriptional repressor that plays a role in cell proliferation. Requires TRIM28 for its activity. The chain is Zinc finger protein 256 (ZNF256) from Homo sapiens (Human).